A 531-amino-acid chain; its full sequence is Zinc finger protein 703-B (531 aa).

The span at 1-10 shows a compositional bias: polar residues; it reads MNCSPPGSCT. Disordered stretches follow at residues 1-28, 88-249, and 295-318; these read MNCS…ATLA, SQIG…VAPI, and VGNQ…LTGA. 2 stretches are compositionally biased toward low complexity: residues 19 to 28 and 113 to 122; these read TPATPCATLA and RSSSLKLGES. Positions 171 to 180 are enriched in polar residues; it reads SPSSRVSSPG. Residues 183-198 show a composition bias toward basic and acidic residues; that stretch reads CESKNNESQEKKEPEV. Residues 199-215 show a composition bias toward polar residues; it reads NKSSLETSQANPTLTRA. The span at 216 to 227 shows a compositional bias: low complexity; it reads SISNSSAESSQS. The C2H2-type zinc-finger motif lies at 404–432; that stretch reads HICNWVSASGPCDKRFATSEELLAHLRTH.

The protein belongs to the Elbow/Noc family.

It is found in the nucleus. The protein resides in the cytoplasm. Transcriptional corepressor which does not bind directly to DNA and may regulate transcription through recruitment of histone deacetylases to gene promoters. Regulates cell adhesion, migration and proliferation. Involved in specification of the lateral neural plate border (NPB). May be required for segmental gene expression during hindbrain development. The sequence is that of Zinc finger protein 703-B (znf703-b) from Xenopus laevis (African clawed frog).